Here is a 502-residue protein sequence, read N- to C-terminus: ATP synthase subunit alpha (502 aa).

Position 169–176 (169–176) interacts with ATP; that stretch reads GDRQTGKT.

It belongs to the ATPase alpha/beta chains family. F-type ATPases have 2 components, CF(1) - the catalytic core - and CF(0) - the membrane proton channel. CF(1) has five subunits: alpha(3), beta(3), gamma(1), delta(1), epsilon(1). CF(0) has three main subunits: a(1), b(2) and c(9-12). The alpha and beta chains form an alternating ring which encloses part of the gamma chain. CF(1) is attached to CF(0) by a central stalk formed by the gamma and epsilon chains, while a peripheral stalk is formed by the delta and b chains.

Its subcellular location is the cell inner membrane. The catalysed reaction is ATP + H2O + 4 H(+)(in) = ADP + phosphate + 5 H(+)(out). Produces ATP from ADP in the presence of a proton gradient across the membrane. The alpha chain is a regulatory subunit. The protein is ATP synthase subunit alpha of Citrifermentans bemidjiense (strain ATCC BAA-1014 / DSM 16622 / JCM 12645 / Bem) (Geobacter bemidjiensis).